Consider the following 378-residue polypeptide: Filamin-binding LIM protein 1 (378 aa).

The interval 1-69 (MASKPEKRVA…RSWMPPGRAA (69 aa)) is filamin-binding. A disordered region spans residues 38–179 (WPGRPWESAP…PPPEEPVSFP (142 aa)). Residues 103-115 (LPPPPPPPAADLP) show a composition bias toward pro residues. LIM zinc-binding domains lie at 186 to 247 (DICA…TLEK), 248 to 305 (CGKC…RKFA), and 306 to 375 (PVCS…RSAA). The tract at residues 281-378 (IGDESFALDS…HVKRSAAGCC (98 aa)) is PLEKHC1-binding.

As to quaternary structure, interacts with PLEKHC1, FLNA, FLNB and FLNC. Interacts with NKX2-5.

Its subcellular location is the cell junction. The protein localises to the focal adhesion. It localises to the cytoplasm. The protein resides in the cytoskeleton. It is found in the stress fiber. In terms of biological role, serves as an anchoring site for cell-ECM adhesion proteins and filamin-containing actin filaments. Is implicated in cell shape modulation (spreading) and motility. May participate in the regulation of filamin-mediated cross-linking and stabilization of actin filaments. May also regulate the assembly of filamin-containing signaling complexes that control actin assembly. Promotes dissociation of FLNA from ITGB3 and ITGB7. Promotes activation of integrins and regulates integrin-mediated cell-cell adhesion. This is Filamin-binding LIM protein 1 (FBLIM1) from Bos taurus (Bovine).